Reading from the N-terminus, the 416-residue chain is Phosphoribosylamine--glycine ligase (416 aa).

One can recognise an ATP-grasp domain in the interval K107–D313. L133–S194 lines the ATP pocket. Mg(2+) contacts are provided by E283 and N285.

Belongs to the GARS family. Mg(2+) is required as a cofactor. Mn(2+) serves as cofactor.

It carries out the reaction 5-phospho-beta-D-ribosylamine + glycine + ATP = N(1)-(5-phospho-beta-D-ribosyl)glycinamide + ADP + phosphate + H(+). It functions in the pathway purine metabolism; IMP biosynthesis via de novo pathway; N(1)-(5-phospho-D-ribosyl)glycinamide from 5-phospho-alpha-D-ribose 1-diphosphate: step 2/2. The protein is Phosphoribosylamine--glycine ligase of Clostridium acetobutylicum (strain ATCC 824 / DSM 792 / JCM 1419 / IAM 19013 / LMG 5710 / NBRC 13948 / NRRL B-527 / VKM B-1787 / 2291 / W).